The primary structure comprises 487 residues: N-succinylglutamate 5-semialdehyde dehydrogenase (487 aa).

221-226 (GSSRTG) lines the NAD(+) pocket. Catalysis depends on residues Glu-244 and Cys-278.

Belongs to the aldehyde dehydrogenase family. AstD subfamily.

The enzyme catalyses N-succinyl-L-glutamate 5-semialdehyde + NAD(+) + H2O = N-succinyl-L-glutamate + NADH + 2 H(+). Its pathway is amino-acid degradation; L-arginine degradation via AST pathway; L-glutamate and succinate from L-arginine: step 4/5. Catalyzes the NAD-dependent reduction of succinylglutamate semialdehyde into succinylglutamate. The polypeptide is N-succinylglutamate 5-semialdehyde dehydrogenase (astD) (Pseudomonas aeruginosa (strain ATCC 15692 / DSM 22644 / CIP 104116 / JCM 14847 / LMG 12228 / 1C / PRS 101 / PAO1)).